A 298-amino-acid polypeptide reads, in one-letter code: Acetylglutamate kinase (298 aa).

Substrate is bound by residues Gly69–Gly70, Arg91, and Asn191.

Belongs to the acetylglutamate kinase family. ArgB subfamily.

It localises to the cytoplasm. The catalysed reaction is N-acetyl-L-glutamate + ATP = N-acetyl-L-glutamyl 5-phosphate + ADP. Its pathway is amino-acid biosynthesis; L-arginine biosynthesis; N(2)-acetyl-L-ornithine from L-glutamate: step 2/4. Its function is as follows. Catalyzes the ATP-dependent phosphorylation of N-acetyl-L-glutamate. This Neisseria meningitidis serogroup C / serotype 2a (strain ATCC 700532 / DSM 15464 / FAM18) protein is Acetylglutamate kinase.